Reading from the N-terminus, the 337-residue chain is Cytoskeleton protein RodZ (337 aa).

Residues 1 to 111 are Cytoplasmic-facing; sequence MNTEATHDQN…LGKRRKKRDG (111 aa). Positions 19–71 constitute an HTH cro/C1-type domain; that stretch reads LRNAREQLGLSQQAVAERLCLKVSTVRDIEEDKAPADLASTFLRGYIRSYARL. A DNA-binding region (H-T-H motif) is located at residues 30 to 49; sequence QQAVAERLCLKVSTVRDIEE. Residues 112-132 traverse the membrane as a helical; Signal-anchor for type II membrane protein segment; sequence WLMTFTWLVLFVVIGLSGAWW. The Periplasmic segment spans residues 133–337; that stretch reads WQDHKAQQEE…TLNAEQSPAQ (205 aa). A compositionally biased stretch (polar residues) spans 145–167; sequence TMADQSSAELSSNSEQGQSVPLN. The tract at residues 145–220 is disordered; sequence TMADQSSAEL…VSPSQANVDT (76 aa). The segment covering 168 to 207 has biased composition (low complexity); the sequence is TSTTTDPATTSTPPASVDTTATNTQTPAVTAPAPAVDPQQ. The span at 208–218 shows a compositional bias: polar residues; that stretch reads NAVVSPSQANV.

It belongs to the RodZ family.

The protein resides in the cell inner membrane. In terms of biological role, cytoskeletal protein that is involved in cell-shape control through regulation of the length of the long axis. The polypeptide is Cytoskeleton protein RodZ (Escherichia coli O17:K52:H18 (strain UMN026 / ExPEC)).